The following is a 299-amino-acid chain: Protease HtpX homolog (299 aa).

The next 2 helical transmembrane spans lie at 7-24 (GILM…GALI) and 29-46 (GAII…FTFW). His130 is a Zn(2+) binding site. Glu131 is an active-site residue. A Zn(2+)-binding site is contributed by His134. 2 consecutive transmembrane segments (helical) span residues 145–165 (VTAT…FFGG) and 174–194 (PVGI…AGLV). Glu203 is a Zn(2+) binding site.

Belongs to the peptidase M48B family. Requires Zn(2+) as cofactor.

The protein localises to the cell inner membrane. This is Protease HtpX homolog from Cereibacter sphaeroides (strain ATCC 17025 / ATH 2.4.3) (Rhodobacter sphaeroides).